The chain runs to 177 residues: Large ribosomal subunit protein uL5 (177 aa).

The protein belongs to the universal ribosomal protein uL5 family. As to quaternary structure, part of the 50S ribosomal subunit; part of the 5S rRNA/L5/L18/L25 subcomplex. Contacts the 5S rRNA and the P site tRNA. Forms a bridge to the 30S subunit in the 70S ribosome.

Functionally, this is one of the proteins that bind and probably mediate the attachment of the 5S RNA into the large ribosomal subunit, where it forms part of the central protuberance. In the 70S ribosome it contacts protein S13 of the 30S subunit (bridge B1b), connecting the 2 subunits; this bridge is implicated in subunit movement. Contacts the P site tRNA; the 5S rRNA and some of its associated proteins might help stabilize positioning of ribosome-bound tRNAs. The sequence is that of Large ribosomal subunit protein uL5 from Wolbachia pipientis wMel.